The primary structure comprises 224 residues: MVKMNVETREELASLIDHTNVRADATENDIERLCREAVSYGFRCAVVTPTNVRLAAELLEGTDVTVCSVVGFPAGVSTPRVKALEASEAVENGAGEVDMVMNIGAMKSGNRELVYRDISGVVDAAGVPVKVILETAYLTDKEKVEACLISKEAGAAFVKTSTAYGGLAGATVEDVMLMRKTVGDEMGVKASGGIRDLETALAMIDAGADRIGTSTGVQIIEGWR.

D98 (proton donor/acceptor) is an active-site residue. Residue K159 is the Schiff-base intermediate with acetaldehyde of the active site. K189 acts as the Proton donor/acceptor in catalysis.

This sequence belongs to the DeoC/FbaB aldolase family. DeoC type 1 subfamily.

It localises to the cytoplasm. It catalyses the reaction 2-deoxy-D-ribose 5-phosphate = D-glyceraldehyde 3-phosphate + acetaldehyde. The protein operates within carbohydrate degradation; 2-deoxy-D-ribose 1-phosphate degradation; D-glyceraldehyde 3-phosphate and acetaldehyde from 2-deoxy-alpha-D-ribose 1-phosphate: step 2/2. In terms of biological role, catalyzes a reversible aldol reaction between acetaldehyde and D-glyceraldehyde 3-phosphate to generate 2-deoxy-D-ribose 5-phosphate. In Methanothermobacter thermautotrophicus (strain ATCC 29096 / DSM 1053 / JCM 10044 / NBRC 100330 / Delta H) (Methanobacterium thermoautotrophicum), this protein is Deoxyribose-phosphate aldolase.